We begin with the raw amino-acid sequence, 211 residues long: Thymidylate kinase (211 aa).

Gly10–Thr17 is an ATP binding site.

The protein belongs to the thymidylate kinase family.

It catalyses the reaction dTMP + ATP = dTDP + ADP. Phosphorylation of dTMP to form dTDP in both de novo and salvage pathways of dTTP synthesis. This is Thymidylate kinase from Lactococcus lactis subsp. cremoris (strain MG1363).